Consider the following 356-residue polypeptide: Histidinol-phosphate aminotransferase (356 aa).

Lys-214 is subject to N6-(pyridoxal phosphate)lysine.

This sequence belongs to the class-II pyridoxal-phosphate-dependent aminotransferase family. Histidinol-phosphate aminotransferase subfamily. Homodimer. It depends on pyridoxal 5'-phosphate as a cofactor.

It carries out the reaction L-histidinol phosphate + 2-oxoglutarate = 3-(imidazol-4-yl)-2-oxopropyl phosphate + L-glutamate. The protein operates within amino-acid biosynthesis; L-histidine biosynthesis; L-histidine from 5-phospho-alpha-D-ribose 1-diphosphate: step 7/9. The chain is Histidinol-phosphate aminotransferase from Escherichia coli (strain SMS-3-5 / SECEC).